Reading from the N-terminus, the 238-residue chain is Fatty acid metabolism regulator protein (238 aa).

An HTH gntR-type domain is found at 6-74 (KGPASFAEKY…HGKPTRVNNF (69 aa)). A DNA-binding region (H-T-H motif) is located at residues 34 to 53 (ERELSELIGVTRTTLREVLQ).

As to quaternary structure, homodimer.

It localises to the cytoplasm. Its function is as follows. Multifunctional regulator of fatty acid metabolism. This chain is Fatty acid metabolism regulator protein, found in Shewanella baltica (strain OS155 / ATCC BAA-1091).